A 311-amino-acid chain; its full sequence is Small ribosomal subunit protein uS3 (311 aa).

A KH type-2 domain is found at 17-86; the sequence is MDEYFAEQLN…NPQIDAQEVK (70 aa). Residues 190 to 267 are disordered; sequence PDSYTTTEPS…EPQAEVAEDL (78 aa). A compositionally biased stretch (low complexity) spans 194-204; the sequence is TTTEPSEPVTE. Basic and acidic residues predominate over residues 205–231; sequence PVEKPAEKPAAKPAEKPVEAPKKESAA. A compositionally biased stretch (low complexity) spans 232-247; that stretch reads KPKTPAVAPEKPVETA. A compositionally biased stretch (acidic residues) spans 248 to 267; the sequence is EVAEPEEAEEEPQAEVAEDL.

It belongs to the universal ribosomal protein uS3 family. In terms of assembly, part of the 30S ribosomal subunit.

Its function is as follows. Binds the lower part of the 30S subunit head. The sequence is that of Small ribosomal subunit protein uS3 from Methanosarcina barkeri (strain Fusaro / DSM 804).